A 439-amino-acid chain; its full sequence is Histidine--tRNA ligase (439 aa).

This sequence belongs to the class-II aminoacyl-tRNA synthetase family. In terms of assembly, homodimer.

The protein resides in the cytoplasm. It catalyses the reaction tRNA(His) + L-histidine + ATP = L-histidyl-tRNA(His) + AMP + diphosphate + H(+). The polypeptide is Histidine--tRNA ligase (hisS) (Leptospira interrogans serogroup Icterohaemorrhagiae serovar Lai (strain 56601)).